The chain runs to 128 residues: Cytochrome c-type biogenesis protein CcmE (128 aa).

Residues 1 to 8 are Cytoplasmic-facing; sequence MQKRVRNR. The chain crosses the membrane as a helical; Signal-anchor for type II membrane protein span at residues 9-29; the sequence is LITIIICFCSACLGISIILYN. The Periplasmic portion of the chain corresponds to 30–128; the sequence is LEKNIVFFLP…KHDENYRPPQ (99 aa). Positions 120 and 124 each coordinate heme.

It belongs to the CcmE/CycJ family.

The protein resides in the cell inner membrane. Its function is as follows. Heme chaperone required for the biogenesis of c-type cytochromes. Transiently binds heme delivered by CcmC and transfers the heme to apo-cytochromes in a process facilitated by CcmF and CcmH. The protein is Cytochrome c-type biogenesis protein CcmE of Rickettsia conorii (strain ATCC VR-613 / Malish 7).